Reading from the N-terminus, the 1819-residue chain is U3 small nucleolar RNA-associated protein 10 (1819 aa).

One copy of the HEAT 1 repeat lies at 583 to 620; the sequence is LDFQAILPFLLVALADPSERIRREAAAALAAIGGIYKK. The next 2 helical transmembrane spans lie at 945–965 and 1001–1021; these read IQSG…AIVN and ALLL…HSVM. 4 HEAT repeats span residues 1045-1082, 1269-1306, 1313-1351, and 1775-1812; these read QTID…AFEH, LTLV…QNPE, IRVL…KYGK, and ALLP…VLGE.

The protein belongs to the HEATR1/UTP10 family. As to quaternary structure, component of the ribosomal small subunit (SSU) processome.

The protein resides in the nucleus. It localises to the nucleolus. The protein localises to the membrane. Its function is as follows. Involved in nucleolar processing of pre-18S ribosomal RNA. Involved in ribosome biosynthesis. The sequence is that of U3 small nucleolar RNA-associated protein 10 from Aspergillus clavatus (strain ATCC 1007 / CBS 513.65 / DSM 816 / NCTC 3887 / NRRL 1 / QM 1276 / 107).